A 402-amino-acid polypeptide reads, in one-letter code: Argininosuccinate synthase (402 aa).

8–16 (AYSGGLDTS) is a binding site for ATP. Tyr86 and Ser91 together coordinate L-citrulline. Residue Gly116 participates in ATP binding. L-aspartate-binding residues include Thr118, Asn122, and Asp123. Asn122 contacts L-citrulline. Arg126, Ser175, Ser184, Glu260, and Tyr272 together coordinate L-citrulline.

It belongs to the argininosuccinate synthase family. Type 1 subfamily. As to quaternary structure, homotetramer.

It localises to the cytoplasm. The enzyme catalyses L-citrulline + L-aspartate + ATP = 2-(N(omega)-L-arginino)succinate + AMP + diphosphate + H(+). It participates in amino-acid biosynthesis; L-arginine biosynthesis; L-arginine from L-ornithine and carbamoyl phosphate: step 2/3. The chain is Argininosuccinate synthase from Clostridium novyi (strain NT).